The primary structure comprises 97 residues: Putative membrane protein insertion efficiency factor (97 aa).

Positions 77–97 (VPDAPASPSPSSSCSCKGPHP) are disordered. The span at 85–97 (SPSSSCSCKGPHP) shows a compositional bias: low complexity.

The protein belongs to the UPF0161 family.

The protein localises to the cell inner membrane. In terms of biological role, could be involved in insertion of integral membrane proteins into the membrane. This is Putative membrane protein insertion efficiency factor from Xanthomonas euvesicatoria pv. vesicatoria (strain 85-10) (Xanthomonas campestris pv. vesicatoria).